A 130-amino-acid polypeptide reads, in one-letter code: Fluoride-specific ion channel FluC (130 aa).

4 helical membrane-spanning segments follow: residues 2–22, 36–56, 71–91, and 100–120; these read GLLLLLVGIGGGFGAMARFAL, GILLCNIIGSLIIGMMAAFLI, FLLVTGFLGGFTTFSSFSLDI, and IFIAIGYIMVSVLASLIAVIL. Na(+) contacts are provided by G79 and T82.

Belongs to the fluoride channel Fluc/FEX (TC 1.A.43) family.

The protein localises to the cell inner membrane. It catalyses the reaction fluoride(in) = fluoride(out). With respect to regulation, na(+) is not transported, but it plays an essential structural role and its presence is essential for fluoride channel function. In terms of biological role, fluoride-specific ion channel. Important for reducing fluoride concentration in the cell, thus reducing its toxicity. The chain is Fluoride-specific ion channel FluC from Francisella tularensis subsp. tularensis (strain FSC 198).